A 1237-amino-acid polypeptide reads, in one-letter code: Anion exchange protein 2 (1237 aa).

The disordered stretch occupies residues 1-237; that stretch reads MSSAPRRPAS…SYNLQERRRI (237 aa). Residues 1–703 are Cytoplasmic-facing; sequence MSSAPRRPAS…SDFRDALDPQ (703 aa). 2 stretches are compositionally biased toward basic and acidic residues: residues 37–49 and 58–75; these read ELHR…RFEE and GGEE…EYHR. Basic residues-rich tracts occupy residues 76–85 and 94–110; these read QSSHHIHHPL and RRRK…RRRP. Serine 113 is modified (phosphoserine). Positions 122 to 133 are enriched in acidic residues; the sequence is EEGEEDEEEANE. Positions 137–151 are enriched in low complexity; sequence ARAPTEPSPASTPSS. Phosphoserine is present on residues serine 144, serine 170, and serine 172. A compositionally biased stretch (gly residues) spans 206 to 215; it reads TAGGDNGGAS. A Phosphoserine modification is found at serine 239. Threonine 253 carries the phosphothreonine modification. Residue lysine 270 is modified to N6-methyllysine. Positions 281–316 are disordered; the sequence is RRHLVRKNAKGSAQSSREGREPGPTPRSRPRAPHKP. A Phosphoserine modification is found at serine 439. The tract at residues 445–464 is disordered; sequence SLLGHHHGQGAESDPHVTEP. A run of 4 helical transmembrane segments spans residues 704 to 727, 733 to 770, 790 to 812, and 822 to 843; these read CVAA…GLLG, LIGV…LLVF, VWIG…SFLV, and IFAF…IKIF. The membrane (anion exchange) stretch occupies residues 704–1237; the sequence is CVAAVIFIYF…DEYNEMPMPV (534 aa). Residues 844–896 lie on the Extracellular side of the membrane; it reads QEHPLHGCSVSNSSETDSSENATWAGAGSTLGPANRSSAGQAGQGRPRGQPNT. Asparagine 855, asparagine 864, and asparagine 878 each carry an N-linked (GlcNAc...) asparagine glycan. A helical membrane pass occupies residues 897-914; that stretch reads ALLSLVLMAGTFFIAFFL. The Cytoplasmic segment spans residues 915–929; sequence RKFKNSRFFPGRIRR. Helical transmembrane passes span 930 to 950, 984 to 1006, 1032 to 1053, 1087 to 1132, and 1159 to 1195; these read VIGD…DYSI, PFPV…LIFM, LLLI…LAAA, VTGL…IQFY, and MHLF…TVPL. Cysteine 1169 carries the S-palmitoyl cysteine lipid modification.

Belongs to the anion exchanger (TC 2.A.31) family. Expressed in the ileum (at protein level).

It localises to the cell membrane. The protein localises to the apical cell membrane. It is found in the basolateral cell membrane. It catalyses the reaction hydrogencarbonate(in) + chloride(out) = hydrogencarbonate(out) + chloride(in). Functionally, sodium-independent anion exchanger which mediates the electroneutral exchange of chloride for bicarbonate ions across the cell membrane. Plays an important role in osteoclast differentiation and function. Regulates bone resorption and calpain-dependent actin cytoskeleton organization in osteoclasts via anion exchange-dependent control of pH. Essential for intracellular pH regulation in CD8(+) T-cells upon CD3 stimulation, modulating CD8(+) T-cell response. The protein is Anion exchange protein 2 (SLC4A2) of Oryctolagus cuniculus (Rabbit).